The chain runs to 756 residues: Catalase-peroxidase (756 aa).

Residues 1 to 26 form the signal peptide; sequence MKGKTVNKQTLAALVSALLVFNPAVA. Positions 126-248 form a cross-link, tryptophyl-tyrosyl-methioninium (Trp-Tyr) (with M-274); the sequence is WHSAGTYRTL…LGATHMGLIY (123 aa). The active-site Proton acceptor is the His127. The segment at residues 248 to 274 is a cross-link (tryptophyl-tyrosyl-methioninium (Tyr-Met) (with W-126)); that stretch reads YVNPEGPKGVPDPLGSAKNIRTAFSRM. His289 lines the heme b pocket.

This sequence belongs to the peroxidase family. Peroxidase/catalase subfamily. In terms of assembly, homodimer or homotetramer. Heme b is required as a cofactor. Formation of the three residue Trp-Tyr-Met cross-link is important for the catalase, but not the peroxidase activity of the enzyme.

It carries out the reaction H2O2 + AH2 = A + 2 H2O. It catalyses the reaction 2 H2O2 = O2 + 2 H2O. Bifunctional enzyme with both catalase and broad-spectrum peroxidase activity. This is Catalase-peroxidase from Shewanella loihica (strain ATCC BAA-1088 / PV-4).